We begin with the raw amino-acid sequence, 501 residues long: Probable cytochrome P450 508A4 (501 aa).

A helical membrane pass occupies residues 1–21 (MIMLIKVFVLLLVVYILHNSY). C445 contributes to the heme binding site.

The protein belongs to the cytochrome P450 family. It depends on heme as a cofactor.

The protein localises to the membrane. The polypeptide is Probable cytochrome P450 508A4 (cyp508A4) (Dictyostelium discoideum (Social amoeba)).